A 355-amino-acid polypeptide reads, in one-letter code: UDP-N-acetylglucosamine--N-acetylmuramyl-(pentapeptide) pyrophosphoryl-undecaprenol N-acetylglucosamine transferase (355 aa).

Residues 15-17 (TGG), N127, R163, S191, I244, 263-268 (ALTVSE), and Q288 each bind UDP-N-acetyl-alpha-D-glucosamine.

It belongs to the glycosyltransferase 28 family. MurG subfamily.

The protein localises to the cell inner membrane. It catalyses the reaction di-trans,octa-cis-undecaprenyl diphospho-N-acetyl-alpha-D-muramoyl-L-alanyl-D-glutamyl-meso-2,6-diaminopimeloyl-D-alanyl-D-alanine + UDP-N-acetyl-alpha-D-glucosamine = di-trans,octa-cis-undecaprenyl diphospho-[N-acetyl-alpha-D-glucosaminyl-(1-&gt;4)]-N-acetyl-alpha-D-muramoyl-L-alanyl-D-glutamyl-meso-2,6-diaminopimeloyl-D-alanyl-D-alanine + UDP + H(+). Its pathway is cell wall biogenesis; peptidoglycan biosynthesis. Cell wall formation. Catalyzes the transfer of a GlcNAc subunit on undecaprenyl-pyrophosphoryl-MurNAc-pentapeptide (lipid intermediate I) to form undecaprenyl-pyrophosphoryl-MurNAc-(pentapeptide)GlcNAc (lipid intermediate II). This is UDP-N-acetylglucosamine--N-acetylmuramyl-(pentapeptide) pyrophosphoryl-undecaprenol N-acetylglucosamine transferase from Escherichia coli O45:K1 (strain S88 / ExPEC).